A 125-amino-acid polypeptide reads, in one-letter code: Small ribosomal subunit protein uS12m (125 aa).

This sequence belongs to the universal ribosomal protein uS12 family.

It is found in the mitochondrion. Its function is as follows. Protein S12 is involved in the translation initiation step. In Allium cepa (Onion), this protein is Small ribosomal subunit protein uS12m (RPS12).